The sequence spans 170 residues: Large ribosomal subunit protein uL15 (170 aa).

A compositionally biased stretch (basic and acidic residues) spans 1–12 (MKLHDLRPAEGS). Positions 1 to 50 (MKLHDLRPAEGSHRKRKRIGRGHGSGKVKTGGKGMMGQKARSGPGPYRTF) are disordered. Positions 13–26 (HRKRKRIGRGHGSG) are enriched in basic residues.

The protein belongs to the universal ribosomal protein uL15 family. In terms of assembly, part of the 50S ribosomal subunit.

Binds to the 23S rRNA. This is Large ribosomal subunit protein uL15 from Chloroflexus aggregans (strain MD-66 / DSM 9485).